Reading from the N-terminus, the 318-residue chain is Ribosomal RNA small subunit methyltransferase A (318 aa).

S-adenosyl-L-methionine contacts are provided by Asn-40, Val-42, Gly-67, Glu-88, Asp-118, and Asn-137. Basic and acidic residues predominate over residues 295 to 305 (SADRGGTDREG). Positions 295–318 (SADRGGTDREGTSPPTAGQGAPAR) are disordered.

It belongs to the class I-like SAM-binding methyltransferase superfamily. rRNA adenine N(6)-methyltransferase family. RsmA subfamily.

It is found in the cytoplasm. It catalyses the reaction adenosine(1518)/adenosine(1519) in 16S rRNA + 4 S-adenosyl-L-methionine = N(6)-dimethyladenosine(1518)/N(6)-dimethyladenosine(1519) in 16S rRNA + 4 S-adenosyl-L-homocysteine + 4 H(+). Functionally, specifically dimethylates two adjacent adenosines (A1518 and A1519) in the loop of a conserved hairpin near the 3'-end of 16S rRNA in the 30S particle. May play a critical role in biogenesis of 30S subunits. The protein is Ribosomal RNA small subunit methyltransferase A of Mycolicibacterium paratuberculosis (strain ATCC BAA-968 / K-10) (Mycobacterium paratuberculosis).